Here is a 294-residue protein sequence, read N- to C-terminus: Serine/threonine-protein kinase Aurora-1 (294 aa).

Positions 31–282 (FDIGKPLGRG…LHKLLEHPWI (252 aa)) constitute a Protein kinase domain. ATP contacts are provided by residues 37–45 (LGRGKFGHV) and Lys-60. The active-site Proton acceptor is the Asp-154. Phosphoserine is present on Ser-176. Thr-185 carries the post-translational modification Phosphothreonine.

Belongs to the protein kinase superfamily. Ser/Thr protein kinase family. Aurora subfamily. As to quaternary structure, interacts with TPX2. Post-translationally, phosphorylation at Thr-185 may regulate activity and degradation of AUR1 in a cell cycle dependent manner. In terms of tissue distribution, abundant in roots, flowers and flower buds, low or absent in expanded leaves, stems and siliques.

The protein resides in the nucleus membrane. It is found in the cytoplasm. The protein localises to the cytoskeleton. Its subcellular location is the spindle. It localises to the spindle pole. The protein resides in the phragmoplast. The enzyme catalyses L-seryl-[protein] + ATP = O-phospho-L-seryl-[protein] + ADP + H(+). It carries out the reaction L-threonyl-[protein] + ATP = O-phospho-L-threonyl-[protein] + ADP + H(+). Its function is as follows. Phosphorylates specifically 'Ser-10' of histone H3 in vitro and colocalizes with phosphorylated histone H3 during mitosis. Associates with cytoskeletal structures that are necessary for cytokinesis and with the microtubule spindle. Also colocalizes with gamma-tubulin and function in microtubule organizing centers (MTOCs). In contrast with the mammalian B-type Aurora, AUR1 has no kinase activity toward 'Ser-28' of histone H3. The polypeptide is Serine/threonine-protein kinase Aurora-1 (AUR1) (Arabidopsis thaliana (Mouse-ear cress)).